Consider the following 98-residue polypeptide: NADH-ubiquinone oxidoreductase chain 4L (98 aa).

The next 3 helical transmembrane spans lie at 1 to 21 (MSPI…GMLV), 26 to 46 (LMAS…MIAL), and 61 to 81 (IILL…LVSI).

This sequence belongs to the complex I subunit 4L family. Core subunit of respiratory chain NADH dehydrogenase (Complex I) which is composed of 45 different subunits.

The protein localises to the mitochondrion inner membrane. It carries out the reaction a ubiquinone + NADH + 5 H(+)(in) = a ubiquinol + NAD(+) + 4 H(+)(out). In terms of biological role, core subunit of the mitochondrial membrane respiratory chain NADH dehydrogenase (Complex I) which catalyzes electron transfer from NADH through the respiratory chain, using ubiquinone as an electron acceptor. Part of the enzyme membrane arm which is embedded in the lipid bilayer and involved in proton translocation. The chain is NADH-ubiquinone oxidoreductase chain 4L (MT-ND4L) from Chlorocebus sabaeus (Green monkey).